The following is a 290-amino-acid chain: MSVRRGRRPARPGTRLSWLLCCSALLSPAAGYVIVSSVSWAVTNEVDEELDSASTEEAMPALLEDSGSIWQQSFPASAHKEDAHLRPRAGAARARPPPAPPGMFSYRREGGQTASAPPGPRLRAATARSLAHASVWGCLATVSTHKKIQGLPFGNCLPVSDGPFNNSTGIPFFYMTAKDPVVADLMKNPMASLMLPESEGEFCRKNIVDPEDPRCVQLTLTGQMIAVSPEEVEFAKQAMFSRHPGMRKWPRQYEWFFMKMRIEHIWLQKWYGGASSISREEYFKAVPRKA.

A signal peptide spans 1–31 (MSVRRGRRPARPGTRLSWLLCCSALLSPAAG). Residues asparagine 165 and asparagine 166 are each glycosylated (N-linked (GlcNAc...) asparagine).

Belongs to the CREG family. It is not sure whether N-glycosylation is on Asn-165 and/or Asn-166. Brain specific mainly in the limbic system and faintly in the spinal cord but not in cerebellum.

It is found in the secreted. This is Protein CREG2 (CREG2) from Homo sapiens (Human).